We begin with the raw amino-acid sequence, 296 residues long: GTPase Era (296 aa).

Positions 7–174 (KCSMNAIVGT…INYLCEISPS (168 aa)) constitute an Era-type G domain. Residues 15-22 (GTTNAGKS) are G1. 15–22 (GTTNAGKS) contacts GTP. The interval 41-45 (QTTRV) is G2. The segment at 62-65 (DTPG) is G3. GTP-binding positions include 62 to 66 (DTPGI) and 124 to 127 (NKID). The interval 124–127 (NKID) is G4. A G5 region spans residues 153-155 (ISA). One can recognise a KH type-2 domain in the interval 205–282 (LHHELPYSLS…HLFLFVKVRE (78 aa)).

The protein belongs to the TRAFAC class TrmE-Era-EngA-EngB-Septin-like GTPase superfamily. Era GTPase family. In terms of assembly, monomer.

It localises to the cytoplasm. It is found in the cell inner membrane. Its function is as follows. An essential GTPase that binds both GDP and GTP, with rapid nucleotide exchange. Plays a role in 16S rRNA processing and 30S ribosomal subunit biogenesis and possibly also in cell cycle regulation and energy metabolism. This is GTPase Era from Ehrlichia canis (strain Jake).